We begin with the raw amino-acid sequence, 107 residues long: Small integral membrane protein 19 (107 aa).

A helical membrane pass occupies residues 25–43 (ATNVYLIVILVSFGLFMYA). Positions 88 to 107 (RKYEYQQPQSQADSVQLSLE) are disordered. The segment covering 93-107 (QQPQSQADSVQLSLE) has biased composition (polar residues).

The protein belongs to the SMIM19 family.

The protein localises to the membrane. The polypeptide is Small integral membrane protein 19 (Smim19) (Mus musculus (Mouse)).